Consider the following 111-residue polypeptide: Glutaredoxin-C2 (111 aa).

Residues 3 to 103 (MQKAKEIVNS…PLLTEAGAIA (101 aa)) enclose the Glutaredoxin domain. Cysteines 23 and 26 form a disulfide.

The protein belongs to the glutaredoxin family. CPYC subfamily.

It is found in the cytoplasm. Its function is as follows. Has a glutathione-disulfide oxidoreductase activity in the presence of NADPH and glutathione reductase. Reduces low molecular weight disulfides and proteins. This Arabidopsis thaliana (Mouse-ear cress) protein is Glutaredoxin-C2 (GRXC2).